A 259-amino-acid polypeptide reads, in one-letter code: Global transcriptional regulator CodY (259 aa).

The interval 1 to 155 is GAF domain; it reads MALLQKTRII…GATVVGMEIL (155 aa). Residues 203–222 constitute a DNA-binding region (H-T-H motif); sequence ASKIADRVGITRSVIVNALR. At serine 215 the chain carries Phosphoserine.

It belongs to the CodY family.

The protein localises to the cytoplasm. Its function is as follows. DNA-binding global transcriptional regulator which is involved in the adaptive response to starvation and acts by directly or indirectly controlling the expression of numerous genes in response to nutrient availability. During rapid exponential growth, CodY is highly active and represses genes whose products allow adaptation to nutrient depletion. This chain is Global transcriptional regulator CodY, found in Bacillus velezensis (strain DSM 23117 / BGSC 10A6 / LMG 26770 / FZB42) (Bacillus amyloliquefaciens subsp. plantarum).